The sequence spans 504 residues: Arabinose import ATP-binding protein AraG (504 aa).

ABC transporter domains lie at 8 to 243 and 256 to 499; these read LSFR…MVGR and YGEE…MPKV. 40–47 provides a ligand contact to ATP; it reads GENGAGKS.

This sequence belongs to the ABC transporter superfamily. Arabinose importer (TC 3.A.1.2.2) family. The complex is composed of two ATP-binding proteins (AraG), two transmembrane proteins (AraH) and a solute-binding protein (AraF).

It is found in the cell inner membrane. The enzyme catalyses L-arabinose(out) + ATP + H2O = L-arabinose(in) + ADP + phosphate + H(+). Functionally, part of the ABC transporter complex AraFGH involved in arabinose import. Responsible for energy coupling to the transport system. This chain is Arabinose import ATP-binding protein AraG, found in Shigella dysenteriae serotype 1 (strain Sd197).